The sequence spans 355 residues: uncharacterized protein (355 aa).

The active-site For GATase activity is the Cys-2. The Glutamine amidotransferase type-2 domain maps to 2–248 (CELLGICFNK…NGELMVFKNG (247 aa)).

This is an uncharacterized protein from Methanocaldococcus jannaschii (strain ATCC 43067 / DSM 2661 / JAL-1 / JCM 10045 / NBRC 100440) (Methanococcus jannaschii).